A 249-amino-acid polypeptide reads, in one-letter code: MEWSDEGIILGVRRHGEAGAIVELLTRGHGRHLGLVRGGASSRLRPLLQPGNSVLAVWRARLDEHLGYYQLEGTRMRAATMLASSHAVYGITHLASLARLLPERDPHEDIYEMLERTLDDFDDVGDAATHLIRFELAMLAELGFGLDLSACAATGATTDLIYVSPKSGGAVSRTAGEPWREKLLRLPDFLREDNDGRNGWSDQDLRDGFDLTGRFLLRNVLEPRGQGHSDARDGFINAVAKHLARAAIV.

The protein belongs to the RecO family.

Functionally, involved in DNA repair and RecF pathway recombination. This Rhodopseudomonas palustris (strain HaA2) protein is DNA repair protein RecO.